A 190-amino-acid chain; its full sequence is Xanthine phosphoribosyltransferase (190 aa).

Residues leucine 20 and asparagine 27 each contribute to the xanthine site. Alanine 128–alanine 132 contacts 5-phospho-alpha-D-ribose 1-diphosphate. Lysine 156 serves as a coordination point for xanthine.

This sequence belongs to the purine/pyrimidine phosphoribosyltransferase family. Xpt subfamily. Homodimer.

Its subcellular location is the cytoplasm. The catalysed reaction is XMP + diphosphate = xanthine + 5-phospho-alpha-D-ribose 1-diphosphate. It participates in purine metabolism; XMP biosynthesis via salvage pathway; XMP from xanthine: step 1/1. Its function is as follows. Converts the preformed base xanthine, a product of nucleic acid breakdown, to xanthosine 5'-monophosphate (XMP), so it can be reused for RNA or DNA synthesis. This chain is Xanthine phosphoribosyltransferase, found in Clostridium novyi (strain NT).